A 208-amino-acid polypeptide reads, in one-letter code: Uracil phosphoribosyltransferase (208 aa).

5-phospho-alpha-D-ribose 1-diphosphate contacts are provided by residues Arg-78, Arg-103, and 130-138 (DPMFATGGT). Residues Ile-193 and 198–200 (GDA) contribute to the uracil site. 5-phospho-alpha-D-ribose 1-diphosphate is bound at residue Asp-199.

It belongs to the UPRTase family. Requires Mg(2+) as cofactor.

It carries out the reaction UMP + diphosphate = 5-phospho-alpha-D-ribose 1-diphosphate + uracil. It participates in pyrimidine metabolism; UMP biosynthesis via salvage pathway; UMP from uracil: step 1/1. With respect to regulation, allosterically activated by GTP. In terms of biological role, catalyzes the conversion of uracil and 5-phospho-alpha-D-ribose 1-diphosphate (PRPP) to UMP and diphosphate. In Campylobacter jejuni subsp. jejuni serotype O:6 (strain 81116 / NCTC 11828), this protein is Uracil phosphoribosyltransferase.